Reading from the N-terminus, the 321-residue chain is p-hydroxybenzoic acid efflux pump subunit AaeA (321 aa).

The chain crosses the membrane as a helical span at residues 22 to 42 (VVITLVIVLCAIVAIFRVWAF).

The protein belongs to the membrane fusion protein (MFP) (TC 8.A.1) family.

The protein resides in the cell inner membrane. In terms of biological role, forms an efflux pump with AaeB. This chain is p-hydroxybenzoic acid efflux pump subunit AaeA, found in Pectobacterium atrosepticum (strain SCRI 1043 / ATCC BAA-672) (Erwinia carotovora subsp. atroseptica).